The chain runs to 28 residues: Kalata-B12 (28 aa).

The segment at residues 1-28 (GSLCGDTCFVLGCNDSSCSCNYPICVKD) is a cross-link (cyclopeptide (Gly-Asp)). 3 disulfides stabilise this stretch: Cys4–Cys18, Cys8–Cys20, and Cys13–Cys25.

In terms of processing, this is a cyclic peptide.

Functionally, probably participates in a plant defense mechanism. The sequence is that of Kalata-B12 from Oldenlandia affinis.